The primary structure comprises 338 residues: 1-aminocyclopropane-1-carboxylate deaminase (338 aa).

N6-(pyridoxal phosphate)lysine is present on K51. The active-site Nucleophile is the S78.

This sequence belongs to the ACC deaminase/D-cysteine desulfhydrase family. Homotrimer. Pyridoxal 5'-phosphate serves as cofactor.

The catalysed reaction is 1-aminocyclopropane-1-carboxylate + H2O = 2-oxobutanoate + NH4(+). In terms of biological role, catalyzes a cyclopropane ring-opening reaction, the irreversible conversion of 1-aminocyclopropane-1-carboxylate (ACC) to ammonia and alpha-ketobutyrate. Allows growth on ACC as a nitrogen source. The protein is 1-aminocyclopropane-1-carboxylate deaminase of Methylibium petroleiphilum (strain ATCC BAA-1232 / LMG 22953 / PM1).